The primary structure comprises 130 residues: Holo-[acyl-carrier-protein] synthase (130 aa).

The Mg(2+) site is built by D9 and E58.

The protein belongs to the P-Pant transferase superfamily. AcpS family. Requires Mg(2+) as cofactor.

It is found in the cytoplasm. It catalyses the reaction apo-[ACP] + CoA = holo-[ACP] + adenosine 3',5'-bisphosphate + H(+). In terms of biological role, transfers the 4'-phosphopantetheine moiety from coenzyme A to a Ser of acyl-carrier-protein. This is Holo-[acyl-carrier-protein] synthase from Mycobacterium leprae (strain Br4923).